The following is a 381-amino-acid chain: 1-deoxy-D-xylulose 5-phosphate reductoisomerase (381 aa).

NADPH contacts are provided by Thr-10, Gly-11, Ser-12, Ile-13, Gly-36, Lys-37, Asn-38, and Asn-122. Lys-123 contributes to the 1-deoxy-D-xylulose 5-phosphate binding site. Glu-124 provides a ligand contact to NADPH. Asp-148 provides a ligand contact to Mn(2+). 1-deoxy-D-xylulose 5-phosphate-binding residues include Ser-149, Glu-150, Ser-173, and His-196. Residue Glu-150 coordinates Mn(2+). NADPH is bound at residue Gly-202. Positions 209, 214, 215, and 218 each coordinate 1-deoxy-D-xylulose 5-phosphate. Residue Glu-218 participates in Mn(2+) binding.

Belongs to the DXR family. It depends on Mg(2+) as a cofactor. The cofactor is Mn(2+).

The enzyme catalyses 2-C-methyl-D-erythritol 4-phosphate + NADP(+) = 1-deoxy-D-xylulose 5-phosphate + NADPH + H(+). The protein operates within isoprenoid biosynthesis; isopentenyl diphosphate biosynthesis via DXP pathway; isopentenyl diphosphate from 1-deoxy-D-xylulose 5-phosphate: step 1/6. Catalyzes the NADPH-dependent rearrangement and reduction of 1-deoxy-D-xylulose-5-phosphate (DXP) to 2-C-methyl-D-erythritol 4-phosphate (MEP). This Desulfitobacterium hafniense (strain Y51) protein is 1-deoxy-D-xylulose 5-phosphate reductoisomerase.